The chain runs to 181 residues: Regulator of G-protein signaling 5 (181 aa).

Positions 64–180 constitute an RGS domain; the sequence is SLDKLLQNNY…VRSEFYQEFI (117 aa).

The protein localises to the cytoplasm. The protein resides in the membrane. Its function is as follows. Inhibits signal transduction by increasing the GTPase activity of G protein alpha subunits thereby driving them into their inactive GDP-bound form. Binds to G(i)-alpha and G(o)-alpha, but not to G(s)-alpha. The polypeptide is Regulator of G-protein signaling 5 (RGS5) (Bos taurus (Bovine)).